Here is an 88-residue protein sequence, read N- to C-terminus: Small ribosomal subunit protein uS17 (88 aa).

This sequence belongs to the universal ribosomal protein uS17 family. As to quaternary structure, part of the 30S ribosomal subunit.

One of the primary rRNA binding proteins, it binds specifically to the 5'-end of 16S ribosomal RNA. The sequence is that of Small ribosomal subunit protein uS17 from Methylorubrum extorquens (strain PA1) (Methylobacterium extorquens).